A 366-amino-acid chain; its full sequence is NADH-quinone oxidoreductase subunit D (366 aa).

The protein belongs to the complex I 49 kDa subunit family. NDH-1 is composed of 14 different subunits. Subunits NuoB, C, D, E, F, and G constitute the peripheral sector of the complex.

The protein localises to the cell membrane. It catalyses the reaction a quinone + NADH + 5 H(+)(in) = a quinol + NAD(+) + 4 H(+)(out). NDH-1 shuttles electrons from NADH, via FMN and iron-sulfur (Fe-S) centers, to quinones in the respiratory chain. The immediate electron acceptor for the enzyme in this species is believed to be a menaquinone. Couples the redox reaction to proton translocation (for every two electrons transferred, four hydrogen ions are translocated across the cytoplasmic membrane), and thus conserves the redox energy in a proton gradient. This chain is NADH-quinone oxidoreductase subunit D, found in Geobacillus thermodenitrificans (strain NG80-2).